A 495-amino-acid polypeptide reads, in one-letter code: Thioredoxin reductase SEP1 (495 aa).

37–54 (DFVKPSPPGTTWGLGGTC) provides a ligand contact to FAD. Cysteine 54 and cysteine 59 are disulfide-bonded. Histidine 468 functions as the Proton acceptor in the catalytic mechanism. The cysteinyl-selenocysteine (Cys-Sec) cross-link spans 493–494 (CU). A non-standard amino acid (selenocysteine) is located at residue selenocysteine 494.

It belongs to the class-I pyridine nucleotide-disulfide oxidoreductase family. In terms of assembly, homodimer. FAD is required as a cofactor. The N-terminus is blocked.

The catalysed reaction is [thioredoxin]-dithiol + NADP(+) = [thioredoxin]-disulfide + NADPH + H(+). Activity was very low in selenium-depleted cells, but increased 4-fold to the same level as in selenium-sufficient cells for 70 hours after the addition of 10 nm selenite. The protein is Thioredoxin reductase SEP1 (SEP1) of Emiliania huxleyi (Coccolithophore).